Reading from the N-terminus, the 156-residue chain is ATP synthase subunit b (156 aa).

The chain crosses the membrane as a helical span at residues 7 to 27; sequence IFFQMLVFFVLGWFTMKFVWP.

The protein belongs to the ATPase B chain family. As to quaternary structure, F-type ATPases have 2 components, F(1) - the catalytic core - and F(0) - the membrane proton channel. F(1) has five subunits: alpha(3), beta(3), gamma(1), delta(1), epsilon(1). F(0) has three main subunits: a(1), b(2) and c(10-14). The alpha and beta chains form an alternating ring which encloses part of the gamma chain. F(1) is attached to F(0) by a central stalk formed by the gamma and epsilon chains, while a peripheral stalk is formed by the delta and b chains.

The protein localises to the cell inner membrane. Functionally, f(1)F(0) ATP synthase produces ATP from ADP in the presence of a proton or sodium gradient. F-type ATPases consist of two structural domains, F(1) containing the extramembraneous catalytic core and F(0) containing the membrane proton channel, linked together by a central stalk and a peripheral stalk. During catalysis, ATP synthesis in the catalytic domain of F(1) is coupled via a rotary mechanism of the central stalk subunits to proton translocation. In terms of biological role, component of the F(0) channel, it forms part of the peripheral stalk, linking F(1) to F(0). The sequence is that of ATP synthase subunit b from Bordetella pertussis (strain Tohama I / ATCC BAA-589 / NCTC 13251).